We begin with the raw amino-acid sequence, 748 residues long: Transcription factor hmgR (748 aa).

A DNA-binding region (zn(2)-C6 fungal-type) is located at residues 24–59; that stretch reads CISCRQRKAKCDLGTGPDGLPLGPPCAKCRREQKPC. 2 disordered regions span residues 108–142 and 661–683; these read SQEDSMIESDSLPETEQHRSGHPVTSEGSSNQIDL and RESTTRHSMVPPSYASATSDEHA.

It is found in the nucleus. Transcription factor; part of the L-tyrosine degradation gene cluster that mediates the biosynthesis of the brownish pigment pyomelanin as an alternative melanin. Acts as a transcriptional activator for the genes of the tyrosine degradation cluster. In Aspergillus fumigatus (strain ATCC MYA-4609 / CBS 101355 / FGSC A1100 / Af293) (Neosartorya fumigata), this protein is Transcription factor hmgR.